A 195-amino-acid polypeptide reads, in one-letter code: ATP-dependent Clp protease proteolytic subunit (195 aa).

Ser99 (nucleophile) is an active-site residue. The active site involves His124.

Belongs to the peptidase S14 family. In terms of assembly, fourteen ClpP subunits assemble into 2 heptameric rings which stack back to back to give a disk-like structure with a central cavity, resembling the structure of eukaryotic proteasomes.

The protein resides in the cytoplasm. The enzyme catalyses Hydrolysis of proteins to small peptides in the presence of ATP and magnesium. alpha-casein is the usual test substrate. In the absence of ATP, only oligopeptides shorter than five residues are hydrolyzed (such as succinyl-Leu-Tyr-|-NHMec, and Leu-Tyr-Leu-|-Tyr-Trp, in which cleavage of the -Tyr-|-Leu- and -Tyr-|-Trp bonds also occurs).. Its function is as follows. Cleaves peptides in various proteins in a process that requires ATP hydrolysis. Has a chymotrypsin-like activity. Plays a major role in the degradation of misfolded proteins. The protein is ATP-dependent Clp protease proteolytic subunit of Desulforamulus reducens (strain ATCC BAA-1160 / DSM 100696 / MI-1) (Desulfotomaculum reducens).